A 175-amino-acid chain; its full sequence is ATP synthase subunit b, chloroplastic (175 aa).

A helical membrane pass occupies residues 26-44 (VINLAVVIGVVVSFVGDAV).

Belongs to the ATPase B chain family. As to quaternary structure, F-type ATPases have 2 components, F(1) - the catalytic core - and F(0) - the membrane proton channel. F(1) has five subunits: alpha(3), beta(3), gamma(1), delta(1), epsilon(1). F(0) has four main subunits: a(1), b(1), b'(1) and c(10-14). The alpha and beta chains form an alternating ring which encloses part of the gamma chain. F(1) is attached to F(0) by a central stalk formed by the gamma and epsilon chains, while a peripheral stalk is formed by the delta, b and b' chains.

The protein localises to the plastid. Its subcellular location is the chloroplast thylakoid membrane. Its function is as follows. F(1)F(0) ATP synthase produces ATP from ADP in the presence of a proton or sodium gradient. F-type ATPases consist of two structural domains, F(1) containing the extramembraneous catalytic core and F(0) containing the membrane proton channel, linked together by a central stalk and a peripheral stalk. During catalysis, ATP synthesis in the catalytic domain of F(1) is coupled via a rotary mechanism of the central stalk subunits to proton translocation. In terms of biological role, component of the F(0) channel, it forms part of the peripheral stalk, linking F(1) to F(0). The sequence is that of ATP synthase subunit b, chloroplastic from Tupiella akineta (Green alga).